The sequence spans 957 residues: Ribonuclease 3-like protein 3 (957 aa).

The RNase III 1 domain maps to 4 to 142 (VEAVEKILNY…IAATVFIDVN (139 aa)). The DRBM 1 domain maps to 307 to 382 (NGRGELIEIC…AYHMIRALES (76 aa)). The region spanning 415–551 (VEAVEKILNY…VAGAVYIDVK (137 aa)) is the RNase III 2 domain. DRBM domains follow at residues 566–645 (EPIY…KLSE) and 837–912 (DEKG…ALES).

In terms of biological role, ribonuclease that cleaves double-stranded RNA (dsRNA). The protein is Ribonuclease 3-like protein 3 (RTL3) of Arabidopsis thaliana (Mouse-ear cress).